The sequence spans 546 residues: MSKVITFSEDARTHILKGVNTLANAVKVTLGPKGRNVVIDKSFGSPLITKDGVTVAKEIELENKFENMGAQMVKEVASKTNDEAGDGTTTATVLAQAIYREGAKLVSAGHNPMSIKRGIDKAVGIIIEELKSMSKPVKGSNEVAQVGAISANNDKEIGQMLADAMDKVGREGVITIEESKTAKTEVTVVEGMQFDRGYLSPYFVTNAERMEAVLENAYVLVYDKKISSMKDMIGILEGVAKQGRQLLIIAEDVEGEALATLVVNKLRGTLHIAAVKAPGFGDRRKAMLEDIAILTGAKVISEDVGLKLEAATVADLGVAKRIVVDKDNTTIIDGAGKKNDINGRVGQIKAQIEETSSDYDKEKLKERLAKLAGGVAVIHVGAPSEVEMKEKKHRVEDALNATRAAVEEGIVAGGGTALLRASTKIDKSKFSEEEQFGATIIKRACEEPIRQIAANAGLDGAIVLDRILQNKSTTWGFNAYSDEYTDLIKDGVIDPVKVVRCALTNAASVSSLMLTTETMIAEAPKKESAAPAMPGHDGMGGMGGMM.

ATP-binding positions include 29-32 (TLGP), K50, 86-90 (DGTTT), G414, and D494. A disordered region spans residues 525 to 546 (KKESAAPAMPGHDGMGGMGGMM). Residues 537–546 (DGMGGMGGMM) are compositionally biased toward gly residues.

The protein belongs to the chaperonin (HSP60) family. In terms of assembly, forms a cylinder of 14 subunits composed of two heptameric rings stacked back-to-back. Interacts with the co-chaperonin GroES.

It is found in the cytoplasm. It catalyses the reaction ATP + H2O + a folded polypeptide = ADP + phosphate + an unfolded polypeptide.. Together with its co-chaperonin GroES, plays an essential role in assisting protein folding. The GroEL-GroES system forms a nano-cage that allows encapsulation of the non-native substrate proteins and provides a physical environment optimized to promote and accelerate protein folding. This Bdellovibrio bacteriovorus (strain ATCC 15356 / DSM 50701 / NCIMB 9529 / HD100) protein is Chaperonin GroEL.